Consider the following 39-residue polypeptide: Photosystem II reaction center protein L (39 aa).

A helical transmembrane segment spans residues 18–38; sequence SLYLGLLFVFVTGVLMSSYFF.

Belongs to the PsbL family. PSII is composed of 1 copy each of membrane proteins PsbA, PsbB, PsbC, PsbD, PsbE, PsbF, PsbH, PsbI, PsbJ, PsbK, PsbL, PsbM, PsbT, PsbX, PsbY, PsbZ, Psb30/Ycf12, peripheral proteins PsbO, CyanoQ (PsbQ), PsbU, PsbV and a large number of cofactors. It forms dimeric complexes.

The protein localises to the cellular thylakoid membrane. Functionally, one of the components of the core complex of photosystem II (PSII). PSII is a light-driven water:plastoquinone oxidoreductase that uses light energy to abstract electrons from H(2)O, generating O(2) and a proton gradient subsequently used for ATP formation. It consists of a core antenna complex that captures photons, and an electron transfer chain that converts photonic excitation into a charge separation. This subunit is found at the monomer-monomer interface and is required for correct PSII assembly and/or dimerization. The chain is Photosystem II reaction center protein L from Parasynechococcus marenigrum (strain WH8102).